The following is an 88-amino-acid chain: Small ribosomal subunit protein bS20 (88 aa).

A disordered region spans residues 1-23; sequence MANSPQAKKRARQNDKARAHNAS.

The protein belongs to the bacterial ribosomal protein bS20 family.

Functionally, binds directly to 16S ribosomal RNA. The chain is Small ribosomal subunit protein bS20 from Saccharophagus degradans (strain 2-40 / ATCC 43961 / DSM 17024).